A 672-amino-acid polypeptide reads, in one-letter code: ABC transporter G family member 21 (672 aa).

Positions 1–35 (MMPPNEQESSFPKTPSANRHETSPVQENRFSSPSH) are enriched in polar residues. Positions 1–59 (MMPPNEQESSFPKTPSANRHETSPVQENRFSSPSHVNPCLDDDNDHDGPSHQSRQSSVL) are disordered. The segment covering 50 to 59 (SHQSRQSSVL) has biased composition (low complexity). Residues 68 to 322 (LKFEELTYSI…FGSIGYQPGS (255 aa)) form the ABC transporter domain. An ATP-binding site is contributed by 117–124 (GPSGSGKT). The ABC transmembrane type-2 domain occupies 411 to 617 (MQFSVLLKRG…CYKLLVGVQY (207 aa)). 6 helical membrane passes run 429–449 (FSGLRIFMVMSVSLLSGLLWW), 460–480 (VGLLFFFSIFWGFFPLFNAIF), 512–532 (LPMELILPTIFVTITYWMGGL), 543–563 (LMIVLYNVLVAQGVGLALGAI), 576–596 (VLMLVFLLAGGYYIQHIPGFI), and 649–669 (WDVLALAVMLLLYRVLAYLAL).

It belongs to the ABC transporter superfamily. ABCG family. Eye pigment precursor importer (TC 3.A.1.204) subfamily.

It localises to the membrane. The chain is ABC transporter G family member 21 (ABCG21) from Arabidopsis thaliana (Mouse-ear cress).